Consider the following 287-residue polypeptide: Outer membrane protein TP0453 (287 aa).

The signal sequence occupies residues 1-24 (MIRRRYRGCTQGAWIVSVGMLFAS). A lipid anchor (N-palmitoyl cysteine) is attached at C25. C25 is lipidated: S-diacylglycerol cysteine. 9 amphipathic helix regions span residues 36–40 (PLGVV), 56–63 (ENLISRII), 69–77 (KADIKKIVD), 103–112 (YAFTNLIFSR), 155–162 (MSKMLSRL), 172–179 (PRFEKECT), 194–202 (GGHFITKLL), 240–250 (FPIQFLISRVL), and 270–279 (AERLASVISS).

A mix of monomer and dimers; may integrate into the membrane as a dimer. Palmitoylated upon expression of a fusion protein with first 46 residues fused to PhoA in E.coli.

It localises to the cell outer membrane. Its function is as follows. Might be involved in ligand transport, alters membrane permeability at acidic pH (4.0 to 5.5). Incubation of the non-lipidated form with lipid vesicles increases their permeability. The protein is Outer membrane protein TP0453 of Treponema pallidum (strain Nichols).